The primary structure comprises 645 residues: Cyclic nucleotide-gated channel rod photoreceptor subunit alpha (645 aa).

The Cytoplasmic segment spans residues 1–121 (MKVGVIETHH…PAGNMYYNWL (121 aa)). The disordered stretch occupies residues 53-100 (NNNSNKDEEKKKKKEKKSKSENKKDGERQKNKEKKEKHKNKDKKKGKE). Over residues 70–86 (SKSENKKDGERQKNKEK) the composition is skewed to basic and acidic residues. A compositionally biased stretch (basic residues) spans 87-96 (KEKHKNKDKK). The helical transmembrane segment at 122 to 143 (FCITMPVMYNWTMIIARACFDE) threads the bilayer. At 144 to 153 (LQNDYLAVWF) the chain is on the extracellular side. The chain crosses the membrane as a helical span at residues 154–174 (IVDYVSDVIYIADMFVRTRTG). Over 175–199 (YLEQGLLVKEEQKLKEKYKSSLQFK) the chain is Cytoplasmic. The chain crosses the membrane as a helical span at residues 200–218 (LDFLSIIPTDLLYFKLGLN). Over 219-223 (YPELR) the chain is Extracellular. The helical transmembrane segment at 224–242 (INRLLRVARMFEFFQRTET) threads the bilayer. The Cytoplasmic segment spans residues 243 to 249 (RTNYPNI). A helical transmembrane segment spans residues 250–273 (FRISNLVMYIVIIIHWNACVYYSI). The Extracellular segment spans residues 274–296 (SKAIGFGADTWVYPNTSHPEFAR). The next 2 helical transmembrane spans lie at 297 to 331 (LTRK…FFVV) and 332 to 356 (VDFL…SNMN). At 357–645 (AARAEFQAKI…TDKPGVTKTE (289 aa)) the chain is on the cytoplasmic side. Residues 439–561 (LLVE…DGLL), E498, and R513 each bind 3',5'-cyclic GMP.

The protein belongs to the cyclic nucleotide-gated cation channel (TC 1.A.1.5) family.

It localises to the membrane. In terms of biological role, visual signal transduction is mediated by a G-protein coupled cascade using cGMP as second messenger. This protein can be activated by cGMP which leads to an opening of the cation channel and thereby causing a depolarization of rod photoreceptors. In Gallus gallus (Chicken), this protein is Cyclic nucleotide-gated channel rod photoreceptor subunit alpha.